Consider the following 112-residue polypeptide: Large ribosomal subunit protein bL21 (112 aa).

Belongs to the bacterial ribosomal protein bL21 family. As to quaternary structure, part of the 50S ribosomal subunit. Contacts protein L20.

This protein binds to 23S rRNA in the presence of protein L20. This chain is Large ribosomal subunit protein bL21, found in Buchnera aphidicola subsp. Baizongia pistaciae (strain Bp).